Consider the following 312-residue polypeptide: Plasminogen activator (312 aa).

Residues 1-20 (MKKSSIVATIITILSGSANA) form the signal peptide. The Periplasmic portion of the chain corresponds to 21–31 (ASSQLIPNISP). A beta stranded membrane pass occupies residues 32–40 (DSFTVAAST). Over 41 to 70 (GMLSGKSHEMLYDAETGRKISQLDWKIKNV) the chain is Extracellular. A beta stranded membrane pass occupies residues 71-80 (AILKGDISWD). Topologically, residues 81-84 (PYSF) are periplasmic. Residues 85–94 (LTLNARGWTS) traverse the membrane as a beta stranded segment. Residues 95–131 (LASGSGNMDDYDWMNENQSEWTDHSSHPATNVNHANE) are Extracellular-facing. Catalysis depends on residues D104 and D106. The chain crosses the membrane as a beta stranded span at residues 132–140 (YDLNVKGWL). The Periplasmic segment spans residues 141–145 (LQDEN). Residues 146–154 (YKAGITAGY) form a beta stranded membrane-spanning segment. Topologically, residues 155–194 (QETRFSWTATGGSYSYNNGAYTGNFPKGVRVIGYNQRFSM) are extracellular. A beta stranded membrane pass occupies residues 195 to 204 (PYIGLAGQYR). At 205-207 (IND) the chain is on the periplasmic side. Residues 208-216 (FELNALFKF) traverse the membrane as a beta stranded segment. Over 217 to 244 (SDWVRAHDNDEHYMRDLTFREKTSGSRY) the chain is Extracellular. Active-site residues include D226 and H228. Residues 245-255 (YGTVINAGYYV) form a beta stranded membrane-spanning segment. Residues 256 to 258 (TPN) are Periplasmic-facing. Residues 259-267 (AKVFAEFTY) traverse the membrane as a beta stranded segment. Over 268–301 (SKYDEGKGGTQTIDKNSGDSVSIGGDAAGISNKN) the chain is Extracellular. The chain crosses the membrane as a beta stranded span at residues 302–312 (YTVTAGLQYRF).

It belongs to the peptidase A26 family.

The protein localises to the cell outer membrane. It carries out the reaction Converts human Glu-plasminogen to plasmin by cleaving the 560-Arg-|-Val-561 peptide bond that is also hydrolyzed by the mammalian u-plasminogen activator and t-plasminogen activator. Also cleaves arginyl bonds in other proteins.. With respect to regulation, requires bacterial lipopolysaccharide (LPS) for activation; addition of LPS to inactive protein reactivates it. In the absence of LPS the active site groove is slightly narrower, and peptide substrate binds deep within the active site groove, displacing the nucleophilic water molecule. In the mammalian host activates (cleaves) plasminogen to generate the serine protease plasmin. Plasmin degrades fibrin clots (fibrinolysis) and facilitates bacterial cell migration, enabling rapid dissemination of bacteria from the initial site of infection. Cleaves host plasminogen to generate plasmin and probably also has autocatalytic activity. Fibrinolytic activity prevails at 37 degrees Celsius whereas coagulase expression predominates at lower temperatures (28 degrees Celsius). Cleaves plasminogen; plasminogen cleavage is much higher than coagulase activity. This chain is Plasminogen activator, found in Yersinia pestis.